A 212-amino-acid chain; its full sequence is Thymidylate kinase (212 aa).

10–17 (GLEGAGKT) is an ATP binding site.

Belongs to the thymidylate kinase family.

It catalyses the reaction dTMP + ATP = dTDP + ADP. Functionally, phosphorylation of dTMP to form dTDP in both de novo and salvage pathways of dTTP synthesis. This Yersinia enterocolitica serotype O:8 / biotype 1B (strain NCTC 13174 / 8081) protein is Thymidylate kinase.